The primary structure comprises 338 residues: Probable tRNA pseudouridine synthase B (338 aa).

Aspartate 78 (nucleophile) is an active-site residue. A PUA domain is found at 245–320 (LPKIILRDSA…LAATSVRIMM (76 aa)).

This sequence belongs to the pseudouridine synthase TruB family. Type 2 subfamily.

It catalyses the reaction uridine(55) in tRNA = pseudouridine(55) in tRNA. Functionally, could be responsible for synthesis of pseudouridine from uracil-55 in the psi GC loop of transfer RNAs. This is Probable tRNA pseudouridine synthase B from Methanosarcina barkeri (strain Fusaro / DSM 804).